A 344-amino-acid polypeptide reads, in one-letter code: Membrane progestin receptor delta (344 aa).

Over 1-51 (MLSLKLPQLLQVHQVPRVFWEDGIMSGYRRPTSSALDCVLSSFQMTNETVN) the chain is Cytoplasmic. A helical transmembrane segment spans residues 52-72 (IWTHFLPTWYFLWRLLALAGG). Topologically, residues 73 to 83 (PGFRAEPYHWP) are extracellular. The chain crosses the membrane as a helical span at residues 84-104 (LLVFLLPACLYPFASCCAHTF). Over 105 to 113 (SSMSPRMRH) the chain is Cytoplasmic. A helical membrane pass occupies residues 114–134 (ICYFLDYGALSLYSLGCAFPY). Residues 135 to 147 (AAYSMPASWLHGH) lie on the Extracellular side of the membrane. The chain crosses the membrane as a helical span at residues 148-168 (LHQFFVPAAALNSFLCTGLSC). At 169–217 (YSRFLELESPGLSKVLRTGAFAYPFLFDNLPLFYRLGLCWGRGHGCGQE) the chain is on the cytoplasmic side. A helical membrane pass occupies residues 218-238 (ALSTSHGYHLFCALLTGFLFA). The Extracellular segment spans residues 239–258 (SHLPERLAPGRFDYIGHSHQ). Residues 259–279 (LFHICAVLGTHFQLEAVLADM) traverse the membrane as a helical segment. Residues 280–292 (GSRRAWLATQEPA) lie on the Cytoplasmic side of the membrane. Residues 293 to 313 (LGLAGTVATLVLAAAGNLLII) traverse the membrane as a helical segment. The Extracellular portion of the chain corresponds to 314–344 (AAFTATLLRAPSTCPLLQGGPLEGGTQAKQQ).

The protein belongs to the ADIPOR family. Homodimer. In terms of tissue distribution, brain specific. Highly expressed in the hypothalamus, also expressed in forebrain, amygdala, corpus callosum and spinal cord.

Its subcellular location is the cell membrane. Its function is as follows. Plasma membrane progesterone (P4) receptor coupled to G proteins. Seems to act through a G(s) mediated pathway. Involved in neurosteroid inhibition of apoptosis. May be involved in regulating rapid P4 signaling in the nervous system. Also binds dehydroepiandrosterone (DHEA), pregnanolone, pregnenolone and allopregnanolone. The polypeptide is Membrane progestin receptor delta (Homo sapiens (Human)).